A 109-amino-acid chain; its full sequence is Histidine-rich carboxyl terminus protein 1 (109 aa).

A helical transmembrane segment spans residues 13–33; the sequence is WITGTALAFLMLLWLMALCLF. Residues 77 to 109 are disordered; the sequence is TSVGVHHHHHHSPHRLHHHKHHHRHHHAHGARR. Residues 81 to 109 show a composition bias toward basic residues; that stretch reads VHHHHHHSPHRLHHHKHHHRHHHAHGARR.

Its subcellular location is the membrane. In Mus musculus (Mouse), this protein is Histidine-rich carboxyl terminus protein 1 (Hrct1).